A 147-amino-acid chain; its full sequence is Probable 4-amino-4-deoxy-L-arabinose-phosphoundecaprenol flippase subunit ArnF (147 aa).

At 1–23 (MSNDHPQGQLPASPARSALKGYL) the chain is on the cytoplasmic side. A helical membrane pass occupies residues 24-44 (YVLGSILLVTAAQLGMKWGVI). The Periplasmic segment spans residues 45–62 (QLPTWQMDLAVMLAHPLP). Residues 63–83 (LLVILAGVGCYALSLLCWLAA) traverse the membrane as a helical segment. Residues 84-93 (LHSTPLNIAY) are Cytoplasmic-facing. Residues 94–114 (PLLSTSYALVYLLAVNIPLFA) traverse the membrane as a helical segment. At 115–121 (EPLEPGK) the chain is on the periplasmic side. A helical transmembrane segment spans residues 122–142 (ALGVLFILLGAVLVGIKPAAG). Residues 143–147 (TKQTG) are Cytoplasmic-facing.

Belongs to the ArnF family. Heterodimer of ArnE and ArnF.

Its subcellular location is the cell inner membrane. It functions in the pathway bacterial outer membrane biogenesis; lipopolysaccharide biosynthesis. Functionally, translocates 4-amino-4-deoxy-L-arabinose-phosphoundecaprenol (alpha-L-Ara4N-phosphoundecaprenol) from the cytoplasmic to the periplasmic side of the inner membrane. The polypeptide is Probable 4-amino-4-deoxy-L-arabinose-phosphoundecaprenol flippase subunit ArnF (Aeromonas hydrophila subsp. hydrophila (strain ATCC 7966 / DSM 30187 / BCRC 13018 / CCUG 14551 / JCM 1027 / KCTC 2358 / NCIMB 9240 / NCTC 8049)).